Consider the following 378-residue polypeptide: Probable endopolygalacturonase AFUB_016610 (378 aa).

A signal peptide spans 1–19 (MLKLMGSLVLLASAAEVIA). The propeptide occupies 20–35 (SPAAEPVAPSTTLEKR). Cysteine 38 and cysteine 56 are oxidised to a cystine. 3 PbH1 repeats span residues 147–169 (TSSS…SING), 170–200 (CDGL…DIGS), and 201–222 (SSNI…AVNS). Aspartate 215 functions as the Proton donor in the catalytic mechanism. Cysteine 217 and cysteine 233 are joined by a disulfide. Histidine 237 is an active-site residue. PbH1 repeat units follow at residues 252 to 273 (VENV…RIKA) and 281 to 303 (IKGV…LIEQ). An N-linked (GlcNAc...) asparagine glycan is attached at asparagine 254. A glycan (N-linked (GlcNAc...) asparagine) is linked at asparagine 327. A disulfide bridge connects residues cysteine 345 and cysteine 350. N-linked (GlcNAc...) asparagine glycosylation is present at asparagine 352. Cysteine 369 and cysteine 378 are disulfide-bonded.

It belongs to the glycosyl hydrolase 28 family.

It is found in the secreted. It carries out the reaction (1,4-alpha-D-galacturonosyl)n+m + H2O = (1,4-alpha-D-galacturonosyl)n + (1,4-alpha-D-galacturonosyl)m.. Functionally, involved in maceration and soft-rotting of plant tissue. Hydrolyzes the 1,4-alpha glycosidic bonds of de-esterified pectate in the smooth region of the plant cell wall. This chain is Probable endopolygalacturonase AFUB_016610, found in Aspergillus fumigatus (strain CBS 144.89 / FGSC A1163 / CEA10) (Neosartorya fumigata).